The primary structure comprises 270 residues: Elongation factor Ts (270 aa).

The involved in Mg(2+) ion dislocation from EF-Tu stretch occupies residues 76 to 79; that stretch reads TDFV.

The protein belongs to the EF-Ts family.

Its subcellular location is the cytoplasm. Associates with the EF-Tu.GDP complex and induces the exchange of GDP to GTP. It remains bound to the aminoacyl-tRNA.EF-Tu.GTP complex up to the GTP hydrolysis stage on the ribosome. The chain is Elongation factor Ts from Corynebacterium aurimucosum (strain ATCC 700975 / DSM 44827 / CIP 107346 / CN-1) (Corynebacterium nigricans).